The chain runs to 43 residues: Potassium channel toxin gamma-KTx 4.8 (43 aa).

Disulfide bonds link Cys-5–Cys-23, Cys-11–Cys-34, Cys-20–Cys-39, and Cys-24–Cys-41.

Belongs to the ergtoxin family. Gamma-KTx 4 subfamily. Expressed by the venom gland.

Its subcellular location is the secreted. Its function is as follows. Reversibly blocks Kv11/ERG potassium channels. This is Potassium channel toxin gamma-KTx 4.8 from Centruroides elegans (Bark scorpion).